The following is an 83-amino-acid chain: Putative defensin-like protein 131 (83 aa).

Residues Met-1–Gly-34 form the signal peptide. 4 disulfide bridges follow: Cys-37–Cys-83, Cys-46–Cys-65, Cys-51–Cys-77, and Cys-55–Cys-79.

This sequence belongs to the DEFL family.

The protein resides in the secreted. This is Putative defensin-like protein 131 (LCR29) from Arabidopsis thaliana (Mouse-ear cress).